The sequence spans 71 residues: Large ribosomal subunit protein bL31 (71 aa).

The Zn(2+) site is built by C16, C18, C37, and C40.

It belongs to the bacterial ribosomal protein bL31 family. Type A subfamily. In terms of assembly, part of the 50S ribosomal subunit. Requires Zn(2+) as cofactor.

Its function is as follows. Binds the 23S rRNA. This Actinobacillus succinogenes (strain ATCC 55618 / DSM 22257 / CCUG 43843 / 130Z) protein is Large ribosomal subunit protein bL31.